A 364-amino-acid polypeptide reads, in one-letter code: Methylthioribose-1-phosphate isomerase (364 aa).

Substrate-binding positions include 49–51, R89, and Q201; that span reads RGA. Catalysis depends on D242, which acts as the Proton donor. 252–253 contributes to the substrate binding site; that stretch reads NK.

The protein belongs to the eIF-2B alpha/beta/delta subunits family. MtnA subfamily.

The catalysed reaction is 5-(methylsulfanyl)-alpha-D-ribose 1-phosphate = 5-(methylsulfanyl)-D-ribulose 1-phosphate. It functions in the pathway amino-acid biosynthesis; L-methionine biosynthesis via salvage pathway; L-methionine from S-methyl-5-thio-alpha-D-ribose 1-phosphate: step 1/6. Functionally, catalyzes the interconversion of methylthioribose-1-phosphate (MTR-1-P) into methylthioribulose-1-phosphate (MTRu-1-P). The sequence is that of Methylthioribose-1-phosphate isomerase from Leptospira interrogans serogroup Icterohaemorrhagiae serovar copenhageni (strain Fiocruz L1-130).